Consider the following 324-residue polypeptide: Beta-ketoacyl-[acyl-carrier-protein] synthase III (324 aa).

Catalysis depends on residues Cys112 and His249. An ACP-binding region spans residues 250-254 (QANRR). Asn279 is a catalytic residue.

The protein belongs to the thiolase-like superfamily. FabH family. Homodimer.

It is found in the cytoplasm. The enzyme catalyses malonyl-[ACP] + acetyl-CoA + H(+) = 3-oxobutanoyl-[ACP] + CO2 + CoA. Its pathway is lipid metabolism; fatty acid biosynthesis. In terms of biological role, catalyzes the condensation reaction of fatty acid synthesis by the addition to an acyl acceptor of two carbons from malonyl-ACP. Catalyzes the first condensation reaction which initiates fatty acid synthesis and may therefore play a role in governing the total rate of fatty acid production. Possesses both acetoacetyl-ACP synthase and acetyl transacylase activities. Its substrate specificity determines the biosynthesis of branched-chain and/or straight-chain of fatty acids. This is Beta-ketoacyl-[acyl-carrier-protein] synthase III from Streptococcus pyogenes serotype M49 (strain NZ131).